The sequence spans 2292 residues: Protein Ycf2 (2292 aa).

Residue 1644–1651 (GSIGTGRS) participates in ATP binding.

Belongs to the Ycf2 family.

It is found in the plastid. The protein localises to the chloroplast stroma. Its function is as follows. Probable ATPase of unknown function. Its presence in a non-photosynthetic plant (Epifagus virginiana) and experiments in tobacco indicate that it has an essential function which is probably not related to photosynthesis. The sequence is that of Protein Ycf2 from Morus indica (Mulberry).